An 810-amino-acid chain; its full sequence is RING finger protein unkempt homolog (810 aa).

Residues 1–24 form a disordered region; that stretch reads MSKGPGPGGSAASSAPPAATAQVL. The span at 10 to 19 shows a compositional bias: low complexity; that stretch reads SAASSAPPAA. 5 C3H1-type zinc fingers span residues 84–113, 124–154, 215–241, 251–285, and 293–321; these read YSPD…HRTT, YYKT…HGPH, NYKT…HNSK, KYRS…HTRT, and IYKS…HIEP. The tract at residues 239 to 265 is disordered; sequence NSKDRRRSPRKHKYRSSPCPNVKHGDE. A Phosphoserine modification is found at Ser-240. The span at 241-253 shows a compositional bias: basic residues; sequence KDRRRSPRKHKYR. A phosphoserine mark is found at Ser-374, Ser-378, Ser-385, and Ser-394. The disordered stretch occupies residues 478–497; it reads TSSLAATPPSPAGTNSTPGM. The residue at position 631 (Ser-631) is a Phosphoserine. Residues 643 to 727 adopt a coiled-coil conformation; that stretch reads GAAELARLRQ…ERLHTVPEAQ (85 aa). The RING-type; degenerate zinc finger occupies 766–801; sequence SVKCLKCQEQTRAVLPCQHAVLCELCAEGSECPVCQ.

The protein belongs to the unkempt family.

The protein localises to the cytoplasm. In terms of biological role, sequence-specific RNA-binding protein which plays an important role in the establishment and maintenance of the early morphology of cortical neurons during embryonic development. Acts as a translation repressor and controls a translationally regulated cell morphology program to ensure proper structuring of the nervous system. Translational control depends on recognition of its binding element within target mRNAs which consists of a mandatory UAG trimer upstream of a U/A-rich motif. Associated with polysomes. The chain is RING finger protein unkempt homolog (Unk) from Mus musculus (Mouse).